The following is a 417-amino-acid chain: Serine hydroxymethyltransferase (417 aa).

(6S)-5,6,7,8-tetrahydrofolate is bound by residues Leu112 and 116–118; that span reads GHL. Position 221 is an N6-(pyridoxal phosphate)lysine (Lys221). Glu247 is a (6S)-5,6,7,8-tetrahydrofolate binding site.

It belongs to the SHMT family. As to quaternary structure, homodimer. The cofactor is pyridoxal 5'-phosphate.

It is found in the cytoplasm. It catalyses the reaction (6R)-5,10-methylene-5,6,7,8-tetrahydrofolate + glycine + H2O = (6S)-5,6,7,8-tetrahydrofolate + L-serine. Its pathway is one-carbon metabolism; tetrahydrofolate interconversion. It functions in the pathway amino-acid biosynthesis; glycine biosynthesis; glycine from L-serine: step 1/1. Catalyzes the reversible interconversion of serine and glycine with tetrahydrofolate (THF) serving as the one-carbon carrier. This reaction serves as the major source of one-carbon groups required for the biosynthesis of purines, thymidylate, methionine, and other important biomolecules. Also exhibits THF-independent aldolase activity toward beta-hydroxyamino acids, producing glycine and aldehydes, via a retro-aldol mechanism. The polypeptide is Serine hydroxymethyltransferase (Borrelia turicatae (strain 91E135)).